The primary structure comprises 157 residues: 3-hydroxybutyryl-CoA dehydratase (157 aa).

In terms of domain architecture, MaoC-like spans 22-120 (KKEISSSDVV…IPERRRARLA (99 aa)).

It catalyses the reaction (3R)-3-hydroxybutanoyl-CoA = (2E)-butenoyl-CoA + H2O. Involved in the regeneration of glyoxylate from a molecule of acetyl-CoA. The protein is 3-hydroxybutyryl-CoA dehydratase of Methylorubrum extorquens (strain ATCC 14718 / DSM 1338 / JCM 2805 / NCIMB 9133 / AM1) (Methylobacterium extorquens).